The sequence spans 379 residues: MSKSALLVLEDGTVFRGVSIGADGISVGEVVFNTSMTGYQEILTDPSYSQQIVTLTYPHIGNTGTTSEDEESSSIHAQGLVIRDLPLIASNFRSEQSLSDYLKSQNIVGIADIDTRKLTRILREKGAQNGCIVAGNNLDEALALAKAKEFPGLKGMDLAKEVTTKEAYQWKQGSWTLEGGLPEAKDDSELPYHVVAYDFGAKRNILRMLVDRGCRLTVVPAETSAEDVLALNPDGVFLSNGPGDPAPCTYAIEATKVFLEKGLPVFGICLGHQILALASGAKTVKMKFGHHGANHPVKDLDRNVVMITSQNHGFAADEATLPDNLRATHVSLFDGSLQGIHRTDKPAFSFQGHPEASPGPHDAAPLFDHFIELIKQHSA.

Residues 1–189 (MSKSALLVLE…GLPEAKDDSE (189 aa)) form a CPSase region. Positions 47, 241, and 243 each coordinate L-glutamine. Residues 193 to 379 (HVVAYDFGAK…FIELIKQHSA (187 aa)) form the Glutamine amidotransferase type-1 domain. Catalysis depends on Cys269, which acts as the Nucleophile. L-glutamine is bound by residues Leu270, Gln273, Asn311, Gly313, and Phe314. Residues His353 and Glu355 contribute to the active site.

The protein belongs to the CarA family. Composed of two chains; the small (or glutamine) chain promotes the hydrolysis of glutamine to ammonia, which is used by the large (or ammonia) chain to synthesize carbamoyl phosphate. Tetramer of heterodimers (alpha,beta)4.

It catalyses the reaction hydrogencarbonate + L-glutamine + 2 ATP + H2O = carbamoyl phosphate + L-glutamate + 2 ADP + phosphate + 2 H(+). The enzyme catalyses L-glutamine + H2O = L-glutamate + NH4(+). The protein operates within amino-acid biosynthesis; L-arginine biosynthesis; carbamoyl phosphate from bicarbonate: step 1/1. It functions in the pathway pyrimidine metabolism; UMP biosynthesis via de novo pathway; (S)-dihydroorotate from bicarbonate: step 1/3. Small subunit of the glutamine-dependent carbamoyl phosphate synthetase (CPSase). CPSase catalyzes the formation of carbamoyl phosphate from the ammonia moiety of glutamine, carbonate, and phosphate donated by ATP, constituting the first step of 2 biosynthetic pathways, one leading to arginine and/or urea and the other to pyrimidine nucleotides. The small subunit (glutamine amidotransferase) binds and cleaves glutamine to supply the large subunit with the substrate ammonia. The chain is Carbamoyl phosphate synthase small chain from Vibrio vulnificus (strain YJ016).